The sequence spans 282 residues: Proteasome subunit beta (282 aa).

A propeptide spans 1-54 (removed in mature form; by autocatalysis); that stretch reads MGSHRDLPAGMVNHIFTNSGISSFTEFVGSYAPDLLPGRNETLAAPVGDRIPHA. Thr-55 acts as the Nucleophile in catalysis.

The protein belongs to the peptidase T1B family. In terms of assembly, the 20S proteasome core is composed of 14 alpha and 14 beta subunits that assemble into four stacked heptameric rings, resulting in a barrel-shaped structure. The two inner rings, each composed of seven catalytic beta subunits, are sandwiched by two outer rings, each composed of seven alpha subunits. The catalytic chamber with the active sites is on the inside of the barrel. Has a gated structure, the ends of the cylinder being occluded by the N-termini of the alpha-subunits. Is capped by the proteasome-associated ATPase, ARC.

Its subcellular location is the cytoplasm. It carries out the reaction Cleavage of peptide bonds with very broad specificity.. Its pathway is protein degradation; proteasomal Pup-dependent pathway. With respect to regulation, the formation of the proteasomal ATPase ARC-20S proteasome complex, likely via the docking of the C-termini of ARC into the intersubunit pockets in the alpha-rings, may trigger opening of the gate for substrate entry. Interconversion between the open-gate and close-gate conformations leads to a dynamic regulation of the 20S proteasome proteolysis activity. Its function is as follows. Component of the proteasome core, a large protease complex with broad specificity involved in protein degradation. The protein is Proteasome subunit beta of Streptosporangium roseum (strain ATCC 12428 / DSM 43021 / JCM 3005 / KCTC 9067 / NCIMB 10171 / NRRL 2505 / NI 9100).